Reading from the N-terminus, the 296-residue chain is Small ribosomal subunit protein uS2 (296 aa).

Residues tryptophan 245 to tryptophan 296 are disordered. Low complexity predominate over residues alanine 263–glutamate 289.

This sequence belongs to the universal ribosomal protein uS2 family. In terms of assembly, component of the small ribosomal subunit. Mature ribosomes consist of a small (40S) and a large (60S) subunit. The 40S subunit contains about 33 different proteins and 1 molecule of RNA (18S). The 60S subunit contains about 49 different proteins and 3 molecules of RNA (25S, 5.8S and 5S). Interacts with RPS21.

It localises to the cytoplasm. Its function is as follows. Required for the assembly and/or stability of the 40S ribosomal subunit. Required for the processing of the 20S rRNA-precursor to mature 18S rRNA in a late step of the maturation of 40S ribosomal subunits. In Fusarium vanettenii (strain ATCC MYA-4622 / CBS 123669 / FGSC 9596 / NRRL 45880 / 77-13-4) (Fusarium solani subsp. pisi), this protein is Small ribosomal subunit protein uS2.